Consider the following 329-residue polypeptide: NADH-quinone oxidoreductase subunit H (329 aa).

The next 9 membrane-spanning stretches (helical) occupy residues 9–29, 42–62, 75–95, 117–137, 154–174, 188–208, 238–258, 269–291, and 309–329; these read LIKI…ATYI, GPSY…IKLF, LIFT…MAPI, IGFL…ILAG, IQLL…LMVV, GGFL…FLIA, LKWG…SFVI, WGFI…LSMW, and WKIM…IILI.

The protein belongs to the complex I subunit 1 family. In terms of assembly, NDH-1 is composed of 14 different subunits. Subunits NuoA, H, J, K, L, M, N constitute the membrane sector of the complex.

It localises to the cell inner membrane. It carries out the reaction a quinone + NADH + 5 H(+)(in) = a quinol + NAD(+) + 4 H(+)(out). Functionally, NDH-1 shuttles electrons from NADH, via FMN and iron-sulfur (Fe-S) centers, to quinones in the respiratory chain. The immediate electron acceptor for the enzyme in this species is believed to be ubiquinone. Couples the redox reaction to proton translocation (for every two electrons transferred, four hydrogen ions are translocated across the cytoplasmic membrane), and thus conserves the redox energy in a proton gradient. This subunit may bind ubiquinone. The protein is NADH-quinone oxidoreductase subunit H of Helicobacter acinonychis (strain Sheeba).